The following is a 60-amino-acid chain: Large ribosomal subunit protein uL30 (60 aa).

It belongs to the universal ribosomal protein uL30 family. As to quaternary structure, part of the 50S ribosomal subunit.

This chain is Large ribosomal subunit protein uL30, found in Streptomyces filamentosus (Streptomyces roseosporus).